The chain runs to 318 residues: Ribosomal RNA small subunit methyltransferase H (318 aa).

S-adenosyl-L-methionine-binding positions include 37–39, D57, F83, D104, and Q111; that span reads GGH.

Belongs to the methyltransferase superfamily. RsmH family.

It is found in the cytoplasm. The catalysed reaction is cytidine(1402) in 16S rRNA + S-adenosyl-L-methionine = N(4)-methylcytidine(1402) in 16S rRNA + S-adenosyl-L-homocysteine + H(+). In terms of biological role, specifically methylates the N4 position of cytidine in position 1402 (C1402) of 16S rRNA. The polypeptide is Ribosomal RNA small subunit methyltransferase H (Neisseria gonorrhoeae (strain NCCP11945)).